Reading from the N-terminus, the 822-residue chain is Serine/threonine-protein phosphatase 4 regulatory subunit 3 (822 aa).

In terms of domain architecture, WH1 spans methionine 1–valine 100. Positions threonine 744 to serine 822 are disordered. The segment covering serine 761 to serine 774 has biased composition (low complexity). Over residues tyrosine 793–lysine 808 the composition is skewed to acidic residues.

It belongs to the SMEK family. As to quaternary structure, serine/threonine-protein phosphatase 4 (PP4) occurs in different assemblies of the catalytic and one or more regulatory subunits.

Functionally, regulatory subunit of serine/threonine-protein phosphatase 4. This is Serine/threonine-protein phosphatase 4 regulatory subunit 3 (smek1) from Xenopus laevis (African clawed frog).